Reading from the N-terminus, the 309-residue chain is Aspartate carbamoyltransferase catalytic subunit (309 aa).

Carbamoyl phosphate contacts are provided by R55 and T56. K85 contributes to the L-aspartate binding site. Positions 106, 135, and 138 each coordinate carbamoyl phosphate. L-aspartate-binding residues include R168 and R230. Carbamoyl phosphate-binding residues include L268 and P269.

It belongs to the aspartate/ornithine carbamoyltransferase superfamily. ATCase family. As to quaternary structure, heterododecamer (2C3:3R2) of six catalytic PyrB chains organized as two trimers (C3), and six regulatory PyrI chains organized as three dimers (R2).

The enzyme catalyses carbamoyl phosphate + L-aspartate = N-carbamoyl-L-aspartate + phosphate + H(+). It functions in the pathway pyrimidine metabolism; UMP biosynthesis via de novo pathway; (S)-dihydroorotate from bicarbonate: step 2/3. Functionally, catalyzes the condensation of carbamoyl phosphate and aspartate to form carbamoyl aspartate and inorganic phosphate, the committed step in the de novo pyrimidine nucleotide biosynthesis pathway. This Wigglesworthia glossinidia brevipalpis protein is Aspartate carbamoyltransferase catalytic subunit.